The primary structure comprises 284 residues: 2-dehydro-3-deoxyphosphooctonate aldolase (284 aa).

It belongs to the KdsA family.

The protein resides in the cytoplasm. The catalysed reaction is D-arabinose 5-phosphate + phosphoenolpyruvate + H2O = 3-deoxy-alpha-D-manno-2-octulosonate-8-phosphate + phosphate. Its pathway is carbohydrate biosynthesis; 3-deoxy-D-manno-octulosonate biosynthesis; 3-deoxy-D-manno-octulosonate from D-ribulose 5-phosphate: step 2/3. It participates in bacterial outer membrane biogenesis; lipopolysaccharide biosynthesis. The protein is 2-dehydro-3-deoxyphosphooctonate aldolase of Klebsiella pneumoniae subsp. pneumoniae (strain ATCC 700721 / MGH 78578).